Here is a 201-residue protein sequence, read N- to C-terminus: Oligoribonuclease (201 aa).

In terms of domain architecture, Exonuclease spans 5–169 (MVWIDCEMTG…ADIRDSITEL (165 aa)). Residue tyrosine 126 is part of the active site.

Belongs to the oligoribonuclease family.

The protein resides in the cytoplasm. In terms of biological role, 3'-to-5' exoribonuclease specific for small oligoribonucleotides. The sequence is that of Oligoribonuclease from Streptomyces griseus.